We begin with the raw amino-acid sequence, 329 residues long: 4-hydroxythreonine-4-phosphate dehydrogenase (329 aa).

H136 and T137 together coordinate substrate. H166, H211, and H266 together coordinate a divalent metal cation. The substrate site is built by K274, N283, and R292.

Belongs to the PdxA family. Homodimer. Zn(2+) is required as a cofactor. Requires Mg(2+) as cofactor. The cofactor is Co(2+).

Its subcellular location is the cytoplasm. It carries out the reaction 4-(phosphooxy)-L-threonine + NAD(+) = 3-amino-2-oxopropyl phosphate + CO2 + NADH. The protein operates within cofactor biosynthesis; pyridoxine 5'-phosphate biosynthesis; pyridoxine 5'-phosphate from D-erythrose 4-phosphate: step 4/5. Functionally, catalyzes the NAD(P)-dependent oxidation of 4-(phosphooxy)-L-threonine (HTP) into 2-amino-3-oxo-4-(phosphooxy)butyric acid which spontaneously decarboxylates to form 3-amino-2-oxopropyl phosphate (AHAP). The protein is 4-hydroxythreonine-4-phosphate dehydrogenase of Pseudomonas syringae pv. tomato (strain ATCC BAA-871 / DC3000).